A 1025-amino-acid polypeptide reads, in one-letter code: Multidrug resistance protein MdtC (1025 aa).

A run of 12 helical transmembrane segments spans residues 15–35 (ILIS…LPVA), 333–353 (EVEQ…FLFL), 360–380 (LIPA…MYLC), 387–407 (LSLM…IVVL), 431–451 (VGFT…PLLL), 469–489 (VAIG…CGWL), 528–548 (LTGL…ISIP), 851–871 (AQVI…GMLY), 875–895 (VHPL…LLAL), 897–917 (IFDA…IGIV), 953–973 (PIMM…LSGG), and 984–1004 (ITIV…TPVV).

It belongs to the resistance-nodulation-cell division (RND) (TC 2.A.6) family. MdtC subfamily. Part of a tripartite efflux system composed of MdtA, MdtB and MdtC. MdtC forms a heteromultimer with MdtB.

The protein resides in the cell inner membrane. The protein is Multidrug resistance protein MdtC of Klebsiella pneumoniae (strain 342).